A 316-amino-acid chain; its full sequence is Ribosomal RNA small subunit methyltransferase H (316 aa).

S-adenosyl-L-methionine is bound by residues 35–37 (GGH), D55, Y79, D100, and Q107.

It belongs to the methyltransferase superfamily. RsmH family.

It is found in the cytoplasm. It carries out the reaction cytidine(1402) in 16S rRNA + S-adenosyl-L-methionine = N(4)-methylcytidine(1402) in 16S rRNA + S-adenosyl-L-homocysteine + H(+). In terms of biological role, specifically methylates the N4 position of cytidine in position 1402 (C1402) of 16S rRNA. The protein is Ribosomal RNA small subunit methyltransferase H of Nitrosospira multiformis (strain ATCC 25196 / NCIMB 11849 / C 71).